A 338-amino-acid polypeptide reads, in one-letter code: Glyceraldehyde-3-phosphate dehydrogenase (338 aa).

Residues 11-12 (TI) and Gly-111 contribute to the NAD(+) site. 140-142 (SCN) contacts D-glyceraldehyde 3-phosphate. The active-site Nucleophile is the Cys-141. Residue Arg-169 participates in NAD(+) binding. 195–196 (HG) contributes to the D-glyceraldehyde 3-phosphate binding site. Position 302 (Gln-302) interacts with NAD(+).

This sequence belongs to the glyceraldehyde-3-phosphate dehydrogenase family. As to quaternary structure, homotetramer.

It is found in the cytoplasm. It carries out the reaction D-glyceraldehyde 3-phosphate + phosphate + NADP(+) = (2R)-3-phospho-glyceroyl phosphate + NADPH + H(+). The enzyme catalyses D-glyceraldehyde 3-phosphate + phosphate + NAD(+) = (2R)-3-phospho-glyceroyl phosphate + NADH + H(+). The protein operates within carbohydrate degradation; glycolysis; pyruvate from D-glyceraldehyde 3-phosphate: step 1/5. This is Glyceraldehyde-3-phosphate dehydrogenase (gap) from Methanobacterium bryantii.